The primary structure comprises 273 residues: Phosphatidylglycerol--prolipoprotein diacylglyceryl transferase (273 aa).

A run of 7 helical transmembrane segments spans residues 19–39 (VHWY…LASY), 55–75 (LVFY…VLFY), 90–110 (VWTG…AMIL), 125–145 (FIAP…FIGA), 174–194 (PSQI…LWWF), 202–222 (MAVS…VEFF), and 230–250 (GFIL…MLLI). Arg138 is an a 1,2-diacyl-sn-glycero-3-phospho-(1'-sn-glycerol) binding site.

It belongs to the Lgt family.

Its subcellular location is the cell inner membrane. It catalyses the reaction L-cysteinyl-[prolipoprotein] + a 1,2-diacyl-sn-glycero-3-phospho-(1'-sn-glycerol) = an S-1,2-diacyl-sn-glyceryl-L-cysteinyl-[prolipoprotein] + sn-glycerol 1-phosphate + H(+). The protein operates within protein modification; lipoprotein biosynthesis (diacylglyceryl transfer). Functionally, catalyzes the transfer of the diacylglyceryl group from phosphatidylglycerol to the sulfhydryl group of the N-terminal cysteine of a prolipoprotein, the first step in the formation of mature lipoproteins. The polypeptide is Phosphatidylglycerol--prolipoprotein diacylglyceryl transferase (Acinetobacter baylyi (strain ATCC 33305 / BD413 / ADP1)).